The sequence spans 85 residues: UPF0291 protein SEQ_0545 (85 aa).

The segment at T62–S85 is disordered.

Belongs to the UPF0291 family.

It is found in the cytoplasm. This is UPF0291 protein SEQ_0545 from Streptococcus equi subsp. equi (strain 4047).